The sequence spans 131 residues: Profilin (131 aa).

This sequence belongs to the profilin family. In terms of assembly, occurs in many kinds of cells as a complex with monomeric actin in a 1:1 ratio.

The protein localises to the cytoplasm. The protein resides in the cytoskeleton. Binds to actin and affects the structure of the cytoskeleton. At high concentrations, profilin prevents the polymerization of actin, whereas it enhances it at low concentrations. By binding to PIP2, it inhibits the formation of IP3 and DG. This Cynodon dactylon (Bermuda grass) protein is Profilin (PRO1).